A 240-amino-acid chain; its full sequence is MSDEFSLADALPENSPAKTSAVSNTKPGQPPQGWPGSNPWNNPSAPPAVPSGLPPSATPSPVPFGPTPTGMYPSVPPTGPPPGPPAPFPPSGPSCPPPGGPYPGPGPTGPYPTPNMPFPELPRPYGAPTDPAAAGPLGPWGSMSSGPWAPGMGGQYPTPNMPYPSPGPYPAPPPPQAPGAAPPVPWGTVPPGAWGPPAPYPAPAGSYPTPGLYPTPNNPFQVPSGPSGAPPMPGGPHSYH.

Residues 1-240 (MSDEFSLADA…PMPGGPHSYH (240 aa)) form a disordered region. Serine 2 bears the N-acetylserine mark. Phosphoserine is present on residues serine 2, serine 6, and serine 15. The span at 16-26 (PAKTSAVSNTK) shows a compositional bias: polar residues. A compositionally biased stretch (low complexity) spans 34 to 43 (WPGSNPWNNP). Composition is skewed to pro residues over residues 44-66 (SAPP…PFGP), 74-122 (SVPP…PELP), 159-185 (PNMP…PPVP), and 193-202 (AWGPPAPYPA).

This sequence belongs to the MISS family.

The chain is MAPK-interacting and spindle-stabilizing protein-like (MAPK1IP1L) from Bos taurus (Bovine).